We begin with the raw amino-acid sequence, 159 residues long: Crossover junction endodeoxyribonuclease RuvC (159 aa).

Active-site residues include D7, E67, and D139. Residues D7, E67, and D139 each coordinate Mg(2+).

Belongs to the RuvC family. As to quaternary structure, homodimer which binds Holliday junction (HJ) DNA. The HJ becomes 2-fold symmetrical on binding to RuvC with unstacked arms; it has a different conformation from HJ DNA in complex with RuvA. In the full resolvosome a probable DNA-RuvA(4)-RuvB(12)-RuvC(2) complex forms which resolves the HJ. Mg(2+) serves as cofactor.

Its subcellular location is the cytoplasm. It catalyses the reaction Endonucleolytic cleavage at a junction such as a reciprocal single-stranded crossover between two homologous DNA duplexes (Holliday junction).. Its function is as follows. The RuvA-RuvB-RuvC complex processes Holliday junction (HJ) DNA during genetic recombination and DNA repair. Endonuclease that resolves HJ intermediates. Cleaves cruciform DNA by making single-stranded nicks across the HJ at symmetrical positions within the homologous arms, yielding a 5'-phosphate and a 3'-hydroxyl group; requires a central core of homology in the junction. The consensus cleavage sequence is 5'-(A/T)TT(C/G)-3'. Cleavage occurs on the 3'-side of the TT dinucleotide at the point of strand exchange. HJ branch migration catalyzed by RuvA-RuvB allows RuvC to scan DNA until it finds its consensus sequence, where it cleaves and resolves the cruciform DNA. The sequence is that of Crossover junction endodeoxyribonuclease RuvC from Orientia tsutsugamushi (strain Ikeda) (Rickettsia tsutsugamushi).